We begin with the raw amino-acid sequence, 103 residues long: Large ribosomal subunit protein bL21 (103 aa).

Belongs to the bacterial ribosomal protein bL21 family. In terms of assembly, part of the 50S ribosomal subunit. Contacts protein L20.

Its function is as follows. This protein binds to 23S rRNA in the presence of protein L20. This chain is Large ribosomal subunit protein bL21, found in Acidovorax sp. (strain JS42).